A 294-amino-acid chain; its full sequence is MEKILVTFSTGAASIAVLAVLFTVPSLYNTINEVHDQVLDGVSVFRVETDSAWTEMMDIQITVTPPTKPRVNPFNSVFRQKRQTFSGLPAWCQCEPTKPTCPPGPPGPPGQPGAPGTPGAPGPKGDDNTATFAPLTCAPVSQDCVKCPQGPAGPAGPSGPAGPAGPDGQPGFPGQRGNDGFPGAPGAPGDNGQPGTPGQDGFPGQPGADGQRGSGAPGAPGAPGNAGPAGPAGQDGFPGQDGAPGPAGPAGQDGFPGNAGSDGQPGAPGGPGLPGNDAAYCACPPRSAVFLSRH.

A signal peptide spans 1–30 (MEKILVTFSTGAASIAVLAVLFTVPSLYNT). A compositionally biased stretch (pro residues) spans 100-112 (TCPPGPPGPPGQP). Disordered stretches follow at residues 100–133 (TCPPGPPGPPGQPGAPGTPGAPGPKGDDNTATFA) and 148–276 (PQGP…LPGN). 2 triple-helical region regions span residues 102-127 (PPGPPGPPGQPGAPGTPGAPGPKGDD) and 148-277 (PQGP…PGND). Composition is skewed to low complexity over residues 164-194 (AGPDGQPGFPGQRGNDGFPGAPGAPGDNGQP) and 219-265 (APGA…DGQP). The 59-residue stretch at 218-276 (GAPGAPGNAGPAGPAGQDGFPGQDGAPGPAGPAGQDGFPGNAGSDGQPGAPGGPGLPGN) folds into the Collagen-like domain.

Belongs to the cuticular collagen family. Collagen polypeptide chains are complexed within the cuticle by disulfide bonds and other types of covalent cross-links.

In terms of biological role, nematode cuticles are composed largely of collagen-like proteins. The cuticle functions both as an exoskeleton and as a barrier to protect the worm from its environment. This Caenorhabditis elegans protein is Putative cuticle collagen 145 (col-145).